The chain runs to 551 residues: Glucans biosynthesis protein D (551 aa).

A signal peptide (tat-type signal) is located at residues 1 to 32; that stretch reads MNRRRFLQGSLAMAALSGTTGLSTLFSRAAFA.

Belongs to the OpgD/OpgG family. In terms of processing, predicted to be exported by the Tat system. The position of the signal peptide cleavage has not been experimentally proven.

It localises to the periplasm. It participates in glycan metabolism; osmoregulated periplasmic glucan (OPG) biosynthesis. Probably involved in the control of the structural glucose backbone of osmoregulated periplasmic glucans (OPGs). The polypeptide is Glucans biosynthesis protein D (Enterobacter sp. (strain 638)).